The primary structure comprises 75 residues: Mu-conotoxin GIIIA (75 aa).

Positions 1–20 (MMSKLGVLLTICLLLFPLTA) are cleaved as a signal peptide. Positions 21–51 (LPMDGDEPANRPVERMQDNISSEQYPLFEKR) are excised as a propeptide. 3 cysteine pairs are disulfide-bonded: Cys54/Cys66, Cys55/Cys71, and Cys61/Cys72. A 4-hydroxyproline; partial mark is found at Pro57 and Pro58. Pro68 carries the post-translational modification 4-hydroxyproline. Alanine amide is present on Ala73.

The protein belongs to the conotoxin M superfamily. Post-translationally, hydroxylated; hydroxylations improve the ability to block Nav1.4/SCN4A sodium channels but does not affect folding. Expressed by the venom duct.

The protein resides in the secreted. Functionally, mu-conotoxins block voltage-gated sodium channels (Nav). This toxin potently blocks rat Nav1.4/SCN4A (IC(50)= 19-110 nM). It also moderately blocks rNav1.1/SCN1A (Kd=260 nM), rNav1.2/SCN2A (IC(50)=2.7-17.8 uM), and mNav1.6/SCN8A (IC(50)=680 nM). The inhibition is reversible. In vivo, induces paralysis to an isolated skeletal muscle preparation from frog (cutaneous pectoralis) within a few minutes. The sequence is that of Mu-conotoxin GIIIA from Conus geographus (Geography cone).